The primary structure comprises 488 residues: Ribulose bisphosphate carboxylase large chain (488 aa).

Substrate-binding residues include Asn127 and Thr177. Lys179 (proton acceptor) is an active-site residue. Lys181 is a binding site for substrate. Mg(2+) is bound by residues Lys205, Asp207, and Glu208. Lys205 bears the N6-carboxylysine mark. The Proton acceptor role is filled by His297. Residues Arg298, His330, and Ser382 each coordinate substrate.

This sequence belongs to the RuBisCO large chain family. Type I subfamily. As to quaternary structure, heterohexadecamer of 8 large chains and 8 small chains. Mg(2+) is required as a cofactor.

Its subcellular location is the plastid. It localises to the chloroplast. The enzyme catalyses 2 (2R)-3-phosphoglycerate + 2 H(+) = D-ribulose 1,5-bisphosphate + CO2 + H2O. The catalysed reaction is D-ribulose 1,5-bisphosphate + O2 = 2-phosphoglycolate + (2R)-3-phosphoglycerate + 2 H(+). In terms of biological role, ruBisCO catalyzes two reactions: the carboxylation of D-ribulose 1,5-bisphosphate, the primary event in carbon dioxide fixation, as well as the oxidative fragmentation of the pentose substrate in the photorespiration process. Both reactions occur simultaneously and in competition at the same active site. This is Ribulose bisphosphate carboxylase large chain from Porphyridium aerugineum (Red microalga).